We begin with the raw amino-acid sequence, 632 residues long: tRNA uridine 5-carboxymethylaminomethyl modification enzyme MnmG (632 aa).

Residues 16 to 21 (GAGHAG), V128, and S183 each bind FAD. A disordered region spans residues 206–225 (PRVNGNTIDYSKTEEEPGDK). Residues 216–225 (SKTEEEPGDK) show a composition bias toward basic and acidic residues. An NAD(+)-binding site is contributed by 277–291 (GPRYCPSIEDKVVRF). Residue Q374 coordinates FAD.

This sequence belongs to the MnmG family. As to quaternary structure, homodimer. Heterotetramer of two MnmE and two MnmG subunits. The cofactor is FAD.

The protein localises to the cytoplasm. NAD-binding protein involved in the addition of a carboxymethylaminomethyl (cmnm) group at the wobble position (U34) of certain tRNAs, forming tRNA-cmnm(5)s(2)U34. This chain is tRNA uridine 5-carboxymethylaminomethyl modification enzyme MnmG, found in Lactobacillus acidophilus (strain ATCC 700396 / NCK56 / N2 / NCFM).